Consider the following 412-residue polypeptide: Serine hydroxymethyltransferase (412 aa).

Residues leucine 117 and 121 to 123 contribute to the (6S)-5,6,7,8-tetrahydrofolate site; that span reads GHL. Position 226 is an N6-(pyridoxal phosphate)lysine (lysine 226). Residues glutamate 242 and 350–352 contribute to the (6S)-5,6,7,8-tetrahydrofolate site; that span reads SPF.

The protein belongs to the SHMT family. In terms of assembly, homodimer. Requires pyridoxal 5'-phosphate as cofactor.

It localises to the cytoplasm. The catalysed reaction is (6R)-5,10-methylene-5,6,7,8-tetrahydrofolate + glycine + H2O = (6S)-5,6,7,8-tetrahydrofolate + L-serine. Its pathway is one-carbon metabolism; tetrahydrofolate interconversion. It functions in the pathway amino-acid biosynthesis; glycine biosynthesis; glycine from L-serine: step 1/1. Its function is as follows. Catalyzes the reversible interconversion of serine and glycine with tetrahydrofolate (THF) serving as the one-carbon carrier. Appears to be specific for THF as the pteridine substrate, since the use of tetrahydromethanopterin (H4MPT) is much less efficient. Also exhibits THF-independent aldolase activity toward beta-hydroxyamino acids, producing glycine and aldehydes, via a retro-aldol mechanism. Thus, is able to catalyze the cleavage of L-allo-threonine and L-threo-beta-phenylserine. This Methanosarcina barkeri (strain Fusaro / DSM 804) protein is Serine hydroxymethyltransferase.